The primary structure comprises 234 residues: ATP synthase subunit a 2 (234 aa).

A run of 6 helical transmembrane segments spans residues 29–49 (FFQH…VGLL), 90–110 (LIAT…IPGF), 116–136 (SLNT…IVGV), 147–167 (FMGP…IGHL), 186–206 (IVLM…MMLM), and 207–227 (GILV…IYIA).

The protein belongs to the ATPase A chain family. F-type ATPases have 2 components, CF(1) - the catalytic core - and CF(0) - the membrane proton channel. CF(1) has five subunits: alpha(3), beta(3), gamma(1), delta(1), epsilon(1). CF(0) has three main subunits: a(1), b(2) and c(9-12). The alpha and beta chains form an alternating ring which encloses part of the gamma chain. CF(1) is attached to CF(0) by a central stalk formed by the gamma and epsilon chains, while a peripheral stalk is formed by the delta and b chains.

Its subcellular location is the cell inner membrane. Key component of the proton channel; it plays a direct role in the translocation of protons across the membrane. The chain is ATP synthase subunit a 2 from Syntrophotalea carbinolica (strain DSM 2380 / NBRC 103641 / GraBd1) (Pelobacter carbinolicus).